The primary structure comprises 240 residues: Phosphatidylserine decarboxylase proenzyme (240 aa).

Serine 209 serves as the catalytic Schiff-base intermediate with substrate; via pyruvic acid. Serine 209 is modified (pyruvic acid (Ser); by autocatalysis).

This sequence belongs to the phosphatidylserine decarboxylase family. PSD-A subfamily. Heterodimer of a large membrane-associated beta subunit and a small pyruvoyl-containing alpha subunit. It depends on pyruvate as a cofactor. Post-translationally, is synthesized initially as an inactive proenzyme. Formation of the active enzyme involves a self-maturation process in which the active site pyruvoyl group is generated from an internal serine residue via an autocatalytic post-translational modification. Two non-identical subunits are generated from the proenzyme in this reaction, and the pyruvate is formed at the N-terminus of the alpha chain, which is derived from the carboxyl end of the proenzyme. The post-translation cleavage follows an unusual pathway, termed non-hydrolytic serinolysis, in which the side chain hydroxyl group of the serine supplies its oxygen atom to form the C-terminus of the beta chain, while the remainder of the serine residue undergoes an oxidative deamination to produce ammonia and the pyruvoyl prosthetic group on the alpha chain.

It localises to the cell membrane. It catalyses the reaction a 1,2-diacyl-sn-glycero-3-phospho-L-serine + H(+) = a 1,2-diacyl-sn-glycero-3-phosphoethanolamine + CO2. Its pathway is phospholipid metabolism; phosphatidylethanolamine biosynthesis; phosphatidylethanolamine from CDP-diacylglycerol: step 2/2. Its function is as follows. Catalyzes the formation of phosphatidylethanolamine (PtdEtn) from phosphatidylserine (PtdSer). This is Phosphatidylserine decarboxylase proenzyme from Mycobacterium ulcerans (strain Agy99).